Consider the following 517-residue polypeptide: Serine hydroxymethyltransferase 2, mitochondrial (517 aa).

Residues 1-29 (MALALRRLSSSVKKPISLLSSNGGSLRFM) constitute a mitochondrion transit peptide. An L-serine-binding site is contributed by serine 82. Pemetrexed contacts are provided by residues serine 82, tyrosine 102, glutamate 104, tyrosine 112, 148–150 (SGS), and histidine 177. 2 residues coordinate L-serine: glutamate 104 and tyrosine 112. Glutamate 104 lines the methotrexate pocket. 184–186 (TDT) is a methotrexate binding site. Residues serine 232 and histidine 260 each contribute to the pemetrexed site. Residues histidine 260 and lysine 286 each coordinate L-serine. Position 286 is an N6-(pyridoxal phosphate)lysine (lysine 286). Glycine 331 serves as a coordination point for pemetrexed. A methotrexate-binding site is contributed by lysine 414. Arginine 430 is a binding site for L-serine. Arginine 430 contacts pemetrexed.

This sequence belongs to the SHMT family. Homotetramer. Pyridoxal 5'-phosphate serves as cofactor. In terms of tissue distribution, ubiquitous. Mainly expressed in the shoot apical meristem and roots. Also detected in the leaf vasculature, especially in the protoxylem and adjacent cell layers.

It localises to the mitochondrion. The enzyme catalyses (6R)-5,10-methylene-5,6,7,8-tetrahydrofolate + glycine + H2O = (6S)-5,6,7,8-tetrahydrofolate + L-serine. It participates in one-carbon metabolism; tetrahydrofolate interconversion. Inhibited by the antifolate drugs methotrexate and pemetrexed. Functionally, functions outside the photorespiratory pathway in catalyzing the interconversion of serine and glycine with the conversion of tetrahydrofolate (THF) into 5,10-methylene-THF. In Arabidopsis thaliana (Mouse-ear cress), this protein is Serine hydroxymethyltransferase 2, mitochondrial.